A 177-amino-acid chain; its full sequence is Thaumatin-like protein (177 aa).

Residues 1 to 26 (MASPATSSAVLVVVLVATLAAGGANA) form the signal peptide.

This sequence belongs to the thaumatin family.

It localises to the secreted. The protein is Thaumatin-like protein of Oryza sativa subsp. japonica (Rice).